The chain runs to 304 residues: tRNA dimethylallyltransferase (304 aa).

Position 16–23 (16–23 (GPTASGKS)) interacts with ATP. 18-23 (TASGKS) contributes to the substrate binding site. Interaction with substrate tRNA regions lie at residues 41–44 (DSMQ) and 165–169 (QRIIR).

It belongs to the IPP transferase family. Monomer. Mg(2+) serves as cofactor.

The catalysed reaction is adenosine(37) in tRNA + dimethylallyl diphosphate = N(6)-dimethylallyladenosine(37) in tRNA + diphosphate. In terms of biological role, catalyzes the transfer of a dimethylallyl group onto the adenine at position 37 in tRNAs that read codons beginning with uridine, leading to the formation of N6-(dimethylallyl)adenosine (i(6)A). The polypeptide is tRNA dimethylallyltransferase (Allorhizobium ampelinum (strain ATCC BAA-846 / DSM 112012 / S4) (Agrobacterium vitis (strain S4))).